The sequence spans 127 residues: Small ribosomal subunit protein uS12 (127 aa).

The segment at 8-28 (IRTEREKARQKTKSPALKQCP) is disordered. Aspartate 89 is subject to 3-methylthioaspartic acid. The segment at 102–127 (LDTAGVKDRKQGRSKYGTKRPKEAKK) is disordered. The span at 113–127 (GRSKYGTKRPKEAKK) shows a compositional bias: basic residues.

It belongs to the universal ribosomal protein uS12 family. Part of the 30S ribosomal subunit. Contacts proteins S8 and S17. May interact with IF1 in the 30S initiation complex.

In terms of biological role, with S4 and S5 plays an important role in translational accuracy. Interacts with and stabilizes bases of the 16S rRNA that are involved in tRNA selection in the A site and with the mRNA backbone. Located at the interface of the 30S and 50S subunits, it traverses the body of the 30S subunit contacting proteins on the other side and probably holding the rRNA structure together. The combined cluster of proteins S8, S12 and S17 appears to hold together the shoulder and platform of the 30S subunit. This chain is Small ribosomal subunit protein uS12, found in Nostoc sp. (strain PCC 7120 / SAG 25.82 / UTEX 2576).